The sequence spans 863 residues: MTENRDNKTSQSEKTTQKKKKKKFKAFKIILITFITLIVISLVTAIGITLAIIKTSPDININEIIAASDASKIYDDKGELVDSIITSKKKILVKYDEVPENLINAFVSIEDERFFKHSGIDVKRIAGAFLIDMKNIVSGKPALQGASTITQQLIKNTVFETHGNSLNDKLRRKVQEWYLAPKLEKEVGKKSIMEAYLNTIYLGGRAIGVGAAADQYFNVSIDKLDLVQCAFIAGLPQSPSVYYPYSRTSKKDPSKYINRTKTVLAKMKENGYISQNEYISALAELDTSKSTVTNDESIQTLGQYTIHKPTNIDEKYNFEWFTRPAIERVKKDLKDIYNYSDDEIEKLLVNGNLKIYTTMNKDLQVSTQEIIDNDEKLNSLSSSKNNLVEPQASAVLTDYHTGEVKVIIGGRGTQPALAYNRATNAKVAAGSSIKPLTVYSAAIDSKLATAATVLEDSPLPEAMSKKYSAPGTNWQPKNANGVYSGYLGLRDALKNSVNVYAVKLEDKIGLNTGVKYGEKFGLTFDNVDKNSMAAIALGELNRGTNTFTMANAYGVFGNNGMYSNPRLYTKVLDRNGNVLLETKTQATQVISPEAAYIMYDLLKGPVKEGTATRIQHTYHSDIPIAGKTGSSTKFKNLWFCGLTPYYSGAVWIENKYGQSIYSSDAAALFGKIMNRAVENLPEKEIEMPEGIIKAEVDRVSGLLPTDLSYKDPRGSQVYTELFIKGTVPTEQDNIHVSTKVNKYNGRVSGSYTPSFLTESKVFIKRQSDSEVPLDDDMYVLPDKDKKSSNKSKHNHNNDAKHDNTNNSEDATNEASTEPSPNTDTVPEDSTNNLDPTKNTEKKPSDKKNKKHVIKPIIRPKKHF.

Over Met-1 to Lys-28 the chain is Cytoplasmic. The chain crosses the membrane as a helical; Signal-anchor for type II membrane protein span at residues Ile-29–Thr-49. Over Leu-50–Phe-863 the chain is Extracellular. A transglycosylase region spans residues Ser-71–Thr-248. The Proton donor; for transglycosylase activity role is filled by Glu-110. The segment at Ala-392–Asn-674 is transpeptidase. Ser-431 functions as the Acyl-ester intermediate; for transpeptidase activity in the catalytic mechanism. The segment at Asp-774–Phe-863 is disordered. The span at Glu-808 to Thr-836 shows a compositional bias: polar residues. Positions Lys-837–Lys-846 are enriched in basic and acidic residues. A compositionally biased stretch (basic residues) spans Lys-847–Phe-863.

This sequence in the N-terminal section; belongs to the glycosyltransferase 51 family. The protein in the C-terminal section; belongs to the transpeptidase family.

The protein localises to the cell membrane. The enzyme catalyses [GlcNAc-(1-&gt;4)-Mur2Ac(oyl-L-Ala-gamma-D-Glu-L-Lys-D-Ala-D-Ala)](n)-di-trans,octa-cis-undecaprenyl diphosphate + beta-D-GlcNAc-(1-&gt;4)-Mur2Ac(oyl-L-Ala-gamma-D-Glu-L-Lys-D-Ala-D-Ala)-di-trans,octa-cis-undecaprenyl diphosphate = [GlcNAc-(1-&gt;4)-Mur2Ac(oyl-L-Ala-gamma-D-Glu-L-Lys-D-Ala-D-Ala)](n+1)-di-trans,octa-cis-undecaprenyl diphosphate + di-trans,octa-cis-undecaprenyl diphosphate + H(+). It carries out the reaction Preferential cleavage: (Ac)2-L-Lys-D-Ala-|-D-Ala. Also transpeptidation of peptidyl-alanyl moieties that are N-acyl substituents of D-alanine.. Its pathway is cell wall biogenesis; peptidoglycan biosynthesis. Cell wall formation. Synthesis of cross-linked peptidoglycan from the lipid intermediates. The enzyme has a penicillin-insensitive transglycosylase N-terminal domain (formation of linear glycan strands) and a penicillin-sensitive transpeptidase C-terminal domain (cross-linking of the peptide subunits). This chain is Penicillin-binding protein 1A (pbpA), found in Clostridium novyi (strain NT).